The sequence spans 240 residues: UDP-2,3-diacylglucosamine hydrolase (240 aa).

5 residues coordinate Mn(2+): Asp-8, His-10, Asp-41, Asn-79, and His-114. Asn-79–Arg-80 contacts substrate. Substrate is bound by residues Asp-122, Ser-160, Asn-164, Lys-167, and His-195. Mn(2+) contacts are provided by His-195 and His-197.

The protein belongs to the LpxH family. It depends on Mn(2+) as a cofactor.

Its subcellular location is the cell inner membrane. It carries out the reaction UDP-2-N,3-O-bis[(3R)-3-hydroxytetradecanoyl]-alpha-D-glucosamine + H2O = 2-N,3-O-bis[(3R)-3-hydroxytetradecanoyl]-alpha-D-glucosaminyl 1-phosphate + UMP + 2 H(+). Its pathway is glycolipid biosynthesis; lipid IV(A) biosynthesis; lipid IV(A) from (3R)-3-hydroxytetradecanoyl-[acyl-carrier-protein] and UDP-N-acetyl-alpha-D-glucosamine: step 4/6. In terms of biological role, hydrolyzes the pyrophosphate bond of UDP-2,3-diacylglucosamine to yield 2,3-diacylglucosamine 1-phosphate (lipid X) and UMP by catalyzing the attack of water at the alpha-P atom. Involved in the biosynthesis of lipid A, a phosphorylated glycolipid that anchors the lipopolysaccharide to the outer membrane of the cell. This is UDP-2,3-diacylglucosamine hydrolase from Escherichia coli O81 (strain ED1a).